The following is a 146-amino-acid chain: Hemoglobin subunit beta (146 aa).

The Globin domain maps to Gln-2–His-146. Heme b is bound by residues His-63 and His-92.

Belongs to the globin family. In terms of assembly, heterotetramer of two alpha chains and two beta chains. Red blood cells.

Functionally, involved in oxygen transport from the lung to the various peripheral tissues. This is Hemoglobin subunit beta (HBB) from Rhea americana (Greater rhea).